Consider the following 442-residue polypeptide: Histidine--tRNA ligase (442 aa).

It belongs to the class-II aminoacyl-tRNA synthetase family. Homodimer.

It is found in the cytoplasm. It carries out the reaction tRNA(His) + L-histidine + ATP = L-histidyl-tRNA(His) + AMP + diphosphate + H(+). The chain is Histidine--tRNA ligase (hisS) from Helicobacter pylori (strain J99 / ATCC 700824) (Campylobacter pylori J99).